A 327-amino-acid chain; its full sequence is tRNA U34 carboxymethyltransferase (327 aa).

Residues Lys91, Trp105, Lys110, Gly130, 181–182 (IE), Met196, Tyr200, and Arg315 each bind carboxy-S-adenosyl-L-methionine.

The protein belongs to the class I-like SAM-binding methyltransferase superfamily. CmoB family. Homotetramer.

The enzyme catalyses carboxy-S-adenosyl-L-methionine + 5-hydroxyuridine(34) in tRNA = 5-carboxymethoxyuridine(34) in tRNA + S-adenosyl-L-homocysteine + H(+). In terms of biological role, catalyzes carboxymethyl transfer from carboxy-S-adenosyl-L-methionine (Cx-SAM) to 5-hydroxyuridine (ho5U) to form 5-carboxymethoxyuridine (cmo5U) at position 34 in tRNAs. In Pectobacterium atrosepticum (strain SCRI 1043 / ATCC BAA-672) (Erwinia carotovora subsp. atroseptica), this protein is tRNA U34 carboxymethyltransferase.